Here is a 362-residue protein sequence, read N- to C-terminus: Peptide chain release factor 1 (362 aa).

Q237 carries the N5-methylglutamine modification.

Belongs to the prokaryotic/mitochondrial release factor family. In terms of processing, methylated by PrmC. Methylation increases the termination efficiency of RF1.

The protein localises to the cytoplasm. In terms of biological role, peptide chain release factor 1 directs the termination of translation in response to the peptide chain termination codons UAG and UAA. This is Peptide chain release factor 1 from Aliivibrio fischeri (strain ATCC 700601 / ES114) (Vibrio fischeri).